The sequence spans 106 residues: Toxin-like structure LSTX-D7 (106 aa).

A signal peptide spans 1 to 20; the sequence is MMKVLVVFALLVTLISYSSS. A propeptide spanning residues 21–41 is cleaved from the precursor; that stretch reads EGIDDLEADELLSLMANEQTR. Intrachain disulfides connect Cys45–Cys60, Cys52–Cys69, Cys59–Cys85, and Cys71–Cys83.

This sequence belongs to the neurotoxin 19 (CSTX) family. 02 (D7) subfamily. As to expression, expressed by the venom gland.

The protein localises to the secreted. In Lycosa singoriensis (Wolf spider), this protein is Toxin-like structure LSTX-D7.